Reading from the N-terminus, the 273-residue chain is MNREIMLIFGTAGVPISAEDEFKAVDVLRKLNLGAMELEFVKGVYMKEDYAKKLKEYGEDIIFSAHAPHYINLNANEEEKVENSIRRIIKTAKVLNNCGKNLVFHPGYYLKRSKEVTYNRIKSNIQRILDKLEALNLNVMLRPETTGKTTQFGDIDETLKLCFELNILPCIDFSHIYARSRGVINDYNSFYKILEKVENVLGKEAIKDMHIHLSGIEYGKGGERRHLPLNESNFNYRDVLKALKDFDASGTVICESPMLEYDAVLLMKCYNEL.

This is an uncharacterized protein from Methanocaldococcus jannaschii (strain ATCC 43067 / DSM 2661 / JAL-1 / JCM 10045 / NBRC 100440) (Methanococcus jannaschii).